Reading from the N-terminus, the 250-residue chain is 5'-nucleotidase SurE (250 aa).

A divalent metal cation contacts are provided by aspartate 8, aspartate 9, serine 39, and asparagine 92.

Belongs to the SurE nucleotidase family. Requires a divalent metal cation as cofactor.

It localises to the cytoplasm. The catalysed reaction is a ribonucleoside 5'-phosphate + H2O = a ribonucleoside + phosphate. Its function is as follows. Nucleotidase that shows phosphatase activity on nucleoside 5'-monophosphates. The chain is 5'-nucleotidase SurE from Vibrio cholerae serotype O1 (strain ATCC 39315 / El Tor Inaba N16961).